We begin with the raw amino-acid sequence, 440 residues long: Beta-1,3-galactosyl-O-glycosyl-glycoprotein beta-1,6-N-acetylglucosaminyltransferase (440 aa).

At M1–R12 the chain is on the cytoplasmic side. A helical; Signal-anchor for type II membrane protein membrane pass occupies residues G13–L30. Residues R31 to L440 are Lumenal-facing. N72 and N108 each carry an N-linked (GlcNAc...) asparagine; by host glycan. Intrachain disulfides connect C73–C230, C164–C384, C185–C212, and C393–C425.

Belongs to the glycosyltransferase 14 family.

The protein localises to the host Golgi apparatus membrane. It catalyses the reaction a 3-O-[beta-D-galactosyl-(1-&gt;3)-N-acetyl-alpha-D-galactosaminyl]-L-seryl-[protein] + UDP-N-acetyl-alpha-D-glucosamine = 3-O-{beta-D-galactosyl-(1-&gt;3)-[N-acetyl-beta-D-glucosaminyl-(1-&gt;6)]-N-acetyl-alpha-D-galactosaminyl}-L-seryl-[protein] + UDP + H(+). The catalysed reaction is a 3-O-[beta-D-galactosyl-(1-&gt;3)-N-acetyl-alpha-D-galactosaminyl]-L-threonyl-[protein] + UDP-N-acetyl-alpha-D-glucosamine = a 3-O-{beta-D-galactosyl-(1-&gt;3)-[N-acetyl-beta-D-glucosaminyl-(1-&gt;6)]-N-acetyl-alpha-D-galactosaminyl}-L-threonyl-[protein] + UDP + H(+). It carries out the reaction a beta-D-Gal-(1-&gt;4)-beta-D-GlcNAc-(1-&gt;3)-beta-D-Gal-(1-&gt;4)-beta-D-GlcNAc derivative + UDP-N-acetyl-alpha-D-glucosamine = a beta-D-Gal-(1-&gt;4)-beta-D-GlcNAc-(1-&gt;3)-[beta-D-GlcNAc-(1-&gt;6)]-beta-D-Gal-(1-&gt;4)-N-acetyl-beta-D-glucosaminyl derivative + UDP + H(+). The enzyme catalyses 3-O-[N-acetyl-beta-D-glucosaminyl-(1-&gt;3)-N-acetyl-alpha-D-galactosaminyl]-L-seryl-[protein] + UDP-N-acetyl-alpha-D-glucosamine = 3-O-[N-acetyl-beta-D-glucosaminyl-(1-&gt;3)-[N-acetyl-beta-D-glucosaminyl-(1-&gt;6)]-N-acetyl-alpha-D-galactosaminyl]-L-seryl-[protein] + UDP + H(+). It catalyses the reaction a 3-O-[N-acetyl-beta-D-glucosaminyl-(1-&gt;3)-N-acetyl-alpha-D-galactosaminyl]-L-threonyl-[protein] + UDP-N-acetyl-alpha-D-glucosamine = 3-O-[N-acetyl-beta-D-glucosaminyl-(1-&gt;3)-[N-acetyl-beta-D-glucosaminyl-(1-&gt;6)]-N-acetyl-alpha-D-galactosaminyl]-L-threonyl-[protein] + UDP + H(+). The protein operates within protein modification; protein glycosylation. Functionally, non-essential glycosyltransferase that can synthesize all known mucin beta 6 N-acetylglucosaminides. Mediates core 2 and core 4 O-glycan branching, 2 important steps in mucin-type biosynthesis. Has also I-branching enzyme activity by converting linear into branched poly-N-acetyllactosaminoglycans. Contributes to the post-translational modifications of structural proteins. This Bos taurus (Bovine) protein is Beta-1,3-galactosyl-O-glycosyl-glycoprotein beta-1,6-N-acetylglucosaminyltransferase (Bo17).